Here is an 865-residue protein sequence, read N- to C-terminus: Adenylate cyclase (865 aa).

A catalytic region spans residues 1-540 (MYLYIETLKQ…DISSHFPIRL (540 aa)). The tract at residues 546–865 (KALYSPCEIR…FNDYQAVHHH (320 aa)) is regulatory.

It belongs to the adenylyl cyclase class-1 family.

It is found in the cytoplasm. It carries out the reaction ATP = 3',5'-cyclic AMP + diphosphate. The sequence is that of Adenylate cyclase (cya) from Proteus mirabilis.